The primary structure comprises 318 residues: MSTHVAGLGLDKMKLGNPQSFLDQEEADDQQLLEPEAWKTYTERRNALREFLTSDLSPHLLKRHHARMQLLRKCSYYIEVLPKHLALGDQNPLVLPSALFQLIDPWKFQRMKKVGTAQTKIQLLLLGDLLEQLDHGRAELDALLRSPDPRPFLADWALVERRLADVSAVMDSFLTMMVPGRLHVKHRLVSDVSATKIPHIWLMLSTKMPVVFDRKASAAHQDWARLRWFVTIQPATSEQYELRFRLLDPRTQQECAQCGVIPVAACTFDVRNLLPNRSYKFTIKRAETSTLVYEPWRDSLTLHTKPEPLEGPALSHSV.

The Fibronectin type-III domain maps to 210-307; it reads VVFDRKASAA…DSLTLHTKPE (98 aa).

This is Fibronectin type III domain-containing protein 11 (FNDC11) from Homo sapiens (Human).